A 649-amino-acid chain; its full sequence is 1-deoxy-D-xylulose-5-phosphate synthase (649 aa).

Thiamine diphosphate contacts are provided by residues His-74 and 115 to 117; that span reads GHA. Asp-146 is a binding site for Mg(2+). Thiamine diphosphate-binding positions include 147 to 148, Asn-176, Tyr-292, and Glu-375; that span reads GA. Asn-176 contacts Mg(2+).

This sequence belongs to the transketolase family. DXPS subfamily. In terms of assembly, homodimer. It depends on Mg(2+) as a cofactor. Thiamine diphosphate serves as cofactor.

The enzyme catalyses D-glyceraldehyde 3-phosphate + pyruvate + H(+) = 1-deoxy-D-xylulose 5-phosphate + CO2. It functions in the pathway metabolic intermediate biosynthesis; 1-deoxy-D-xylulose 5-phosphate biosynthesis; 1-deoxy-D-xylulose 5-phosphate from D-glyceraldehyde 3-phosphate and pyruvate: step 1/1. Functionally, catalyzes the acyloin condensation reaction between C atoms 2 and 3 of pyruvate and glyceraldehyde 3-phosphate to yield 1-deoxy-D-xylulose-5-phosphate (DXP). This chain is 1-deoxy-D-xylulose-5-phosphate synthase, found in Synechococcus sp. (strain JA-3-3Ab) (Cyanobacteria bacterium Yellowstone A-Prime).